A 249-amino-acid polypeptide reads, in one-letter code: tRNA (guanine-N(1)-)-methyltransferase (249 aa).

S-adenosyl-L-methionine contacts are provided by residues G113 and 133–138 (IGDFVL).

The protein belongs to the RNA methyltransferase TrmD family. As to quaternary structure, homodimer.

The protein resides in the cytoplasm. The enzyme catalyses guanosine(37) in tRNA + S-adenosyl-L-methionine = N(1)-methylguanosine(37) in tRNA + S-adenosyl-L-homocysteine + H(+). Specifically methylates guanosine-37 in various tRNAs. In Photobacterium profundum (strain SS9), this protein is tRNA (guanine-N(1)-)-methyltransferase.